We begin with the raw amino-acid sequence, 430 residues long: Adenylosuccinate synthetase (430 aa).

Residues 13–19 (GDEGKGK) and 41–43 (GHT) each bind GTP. The active-site Proton acceptor is the aspartate 14. The Mg(2+) site is built by aspartate 14 and glycine 41. IMP is bound by residues 14–17 (DEGK), 39–42 (NAGH), threonine 130, arginine 144, glutamine 225, threonine 240, and arginine 304. Histidine 42 (proton donor) is an active-site residue. Residue 300–306 (ATTGRAR) participates in substrate binding. GTP contacts are provided by residues arginine 306, 332-334 (KLD), and 414-416 (STG).

The protein belongs to the adenylosuccinate synthetase family. In terms of assembly, homodimer. It depends on Mg(2+) as a cofactor.

The protein resides in the cytoplasm. It carries out the reaction IMP + L-aspartate + GTP = N(6)-(1,2-dicarboxyethyl)-AMP + GDP + phosphate + 2 H(+). It participates in purine metabolism; AMP biosynthesis via de novo pathway; AMP from IMP: step 1/2. Plays an important role in the de novo pathway of purine nucleotide biosynthesis. Catalyzes the first committed step in the biosynthesis of AMP from IMP. The protein is Adenylosuccinate synthetase of Pseudomonas fluorescens (strain ATCC BAA-477 / NRRL B-23932 / Pf-5).